We begin with the raw amino-acid sequence, 88 residues long: FXYD domain-containing ion transport regulator 3 (88 aa).

Positions 1–20 (MQEFALSLLVLLAGLPTLDA) are cleaved as a signal peptide. Residues 21 to 38 (NDPEDKDSPFYYDWHSLR) lie on the Extracellular side of the membrane. The helical transmembrane segment at 39–59 (VGGLICAGILCALGIIVLMSG) threads the bilayer. Topologically, residues 60-88 (KCKCKFSQKPSHRPGDGPPLITPGSAHNC) are cytoplasmic. Residues 66-88 (SQKPSHRPGDGPPLITPGSAHNC) are disordered.

This sequence belongs to the FXYD family. In terms of assembly, regulatory subunit of the sodium/potassium-transporting ATPase which is composed of a catalytic alpha subunit, a non-catalytic beta subunit and an additional regulatory subunit. Interacts with catalytic alpha subunit ATP1A1. Also interacts with non-catalytic beta subunit ATP1B1. Interacts with the alpha1-beta1, alpha2-beta1 and alpha3-beta1 NKA isozymes. Glutathionylated.

It is found in the cell membrane. Its function is as follows. Associates with and regulates the activity of the sodium/potassium-transporting ATPase (NKA) which transports Na(+) out of the cell and K(+) into the cell. Reduces glutathionylation of the NKA beta-1 subunit ATP1B1, thus reversing glutathionylation-mediated inhibition of ATP1B1. Induces a hyperpolarization-activated chloride current when expressed in Xenopus oocytes. The protein is FXYD domain-containing ion transport regulator 3 (Fxyd3) of Rattus norvegicus (Rat).